Here is a 235-residue protein sequence, read N- to C-terminus: Carbohydrate deacetylase (235 aa).

Residues His61 and His124 each contribute to the Mg(2+) site.

It belongs to the YdjC deacetylase family. Requires Mg(2+) as cofactor.

In terms of biological role, probably catalyzes the deacetylation of acetylated carbohydrates an important step in the degradation of oligosaccharides. The sequence is that of Carbohydrate deacetylase from Bacillus cereus (strain 03BB102).